We begin with the raw amino-acid sequence, 453 residues long: Glutamyl-tRNA(Gln) amidotransferase subunit A (453 aa).

Active-site charge relay system residues include K56 and S131. The Acyl-ester intermediate role is filled by S155.

The protein belongs to the amidase family. GatA subfamily. As to quaternary structure, heterotrimer of A, B and C subunits.

It catalyses the reaction L-glutamyl-tRNA(Gln) + L-glutamine + ATP + H2O = L-glutaminyl-tRNA(Gln) + L-glutamate + ADP + phosphate + H(+). In terms of biological role, allows the formation of correctly charged Gln-tRNA(Gln) through the transamidation of misacylated Glu-tRNA(Gln) in organisms which lack glutaminyl-tRNA synthetase. The reaction takes place in the presence of glutamine and ATP through an activated gamma-phospho-Glu-tRNA(Gln). This Campylobacter jejuni subsp. doylei (strain ATCC BAA-1458 / RM4099 / 269.97) protein is Glutamyl-tRNA(Gln) amidotransferase subunit A.